We begin with the raw amino-acid sequence, 487 residues long: b(0,+)-type amino acid transporter 1 (487 aa).

The tract at residues 1–20 (MEETSLRRRREDEKSTHSTE) is disordered. Residues 1 to 31 (MEETSLRRRREDEKSTHSTELKTTSLQKEVG) are Cytoplasmic-facing. Residue serine 18 is modified to Phosphoserine. Residues 32–55 (LLSGICIIVGTIIGSGIFISPKSV) traverse the membrane as a helical segment. 43 to 47 (IIGSG) is a binding site for L-arginine. The Extracellular portion of the chain corresponds to 56–62 (LANTESV). The helical transmembrane segment at 63–84 (GPCLIIWAACGILATLGALCFA) threads the bilayer. The Cytoplasmic portion of the chain corresponds to 85 to 110 (ELGTMITKSGGEYPYLMEAFGPIPAY). Residues 111–137 (LFSWTSLIVMKPSSFAIICLSFSEYVC) traverse the membrane as a helical segment. The Extracellular portion of the chain corresponds to 138 to 147 (AAFYSGCKPP). Helical transmembrane passes span 148 to 169 (AVVV…NALS) and 170 to 193 (VRLG…IIII). The Extracellular segment spans residues 194–217 (SGLVFLAQGNVKNFQNSFEGTQTS). A helical membrane pass occupies residues 218-238 (VGAISLAFYNGLWAYDGWNQL). Aspartate 233 contributes to the L-arginine binding site. The Cytoplasmic segment spans residues 239–251 (NYITEELRNPYRN). A helical transmembrane segment spans residues 252 to 274 (LPMAIVIGIPLVTVCYILMNIAY). The Extracellular segment spans residues 275–302 (FTVMTPTELLQSQAVAVTFGDRVLYPAS). The chain crosses the membrane as a helical span at residues 303 to 325 (WVVPLFVAFSTIGAANGTCFTAG). At 326-351 (RLIYVAGREGHMLKVLSYISVKRLTP) the chain is on the cytoplasmic side. The next 2 membrane-spanning stretches (helical) occupy residues 352–370 (APAL…IPGD) and 371–391 (INSL…MTIL). Over 392–410 (GLVVMRFTRKDLERPIKVP) the chain is Cytoplasmic. Residues 411 to 431 (LFIPIIVILVSLFLILAPIIS) form a helical membrane-spanning segment. Residues 432–434 (EPA) lie on the Extracellular side of the membrane. The chain crosses the membrane as a helical span at residues 435 to 450 (WEYLYCVLFILSGLIF). Topologically, residues 451–487 (YFLFVYYKFGWAQRISRPVTKHLQMLMEVVPPEKDPE) are cytoplasmic.

The protein belongs to the amino acid-polyamine-organocation (APC) superfamily. In terms of assembly, disulfide-linked heterodimer composed of the catalytic light chain subunit SLC7A9 and the heavy chain subunit SLC3A1. The heterodimer is the minimal functional unit. Assembles in heterotetramers (dimers of heterodimers) and higher order oligomers; the oligomerization is mediated by SLC3A1 likely to prevent degradation and facilitate heteromer trafficking to the plasma membrane. Interacts with CAV1. As to expression, expressed in the brush border membrane in the kidney (at protein level).

It localises to the apical cell membrane. It catalyses the reaction L-leucine(out) + L-arginine(in) = L-leucine(in) + L-arginine(out). It carries out the reaction L-histidine(out) + L-arginine(in) = L-histidine(in) + L-arginine(out). The enzyme catalyses L-arginine(in) + L-phenylalanine(out) = L-arginine(out) + L-phenylalanine(in). The catalysed reaction is L-cysteine(out) + L-arginine(in) = L-cysteine(in) + L-arginine(out). It catalyses the reaction L-cystine(out) + L-arginine(in) = L-cystine(in) + L-arginine(out). It carries out the reaction L-lysine(out) + L-arginine(in) = L-lysine(in) + L-arginine(out). Associates with SLC3A1 to form a functional transporter complex that mediates the electrogenic exchange between cationic amino acids and neutral amino acids, with a stoichiometry of 1:1. Has system b(0,+)-like activity with high affinity for extracellular cationic amino acids and L-cystine and lower affinity for intracellular neutral amino acids. Substrate exchange is driven by high concentration of intracellular neutral amino acids and the intracellular reduction of L-cystine to L-cysteine. Required for reabsorption of L-cystine and dibasic amino acids across the brush border membrane in renal proximal tubules. The chain is b(0,+)-type amino acid transporter 1 (Slc7a9) from Mus musculus (Mouse).